Reading from the N-terminus, the 68-residue chain is uncharacterized protein (68 aa).

An N-terminal signal peptide occupies residues 1–15 (MTIIFLICLDASTQS). The segment at 14–68 (QSTTNNSINNNNNNNNNNNNNNNNNNNNNNNNNNNNNNNNNNNNNNSKVFDFNIF) is disordered. Residues Asn18 and Asn58 are each glycosylated (N-linked (GlcNAc...) asparagine). Residues 22-59 (NNNNNNNNNNNNNNNNNNNNNNNNNNNNNNNNNNNNNN) show a composition bias toward low complexity.

The protein localises to the secreted. This is an uncharacterized protein from Dictyostelium discoideum (Social amoeba).